A 437-amino-acid chain; its full sequence is Minor fimbrial subunit HifE (437 aa).

The signal sequence occupies residues 1 to 30; it reads MNKKSYINHYLTLFKVTTLLFTLSSNPVWA.

The protein belongs to the fimbrial protein family.

Its subcellular location is the fimbrium. May be a minor structural protein required for pilus biogenesis. May be the adhesive component in the pili. The sequence is that of Minor fimbrial subunit HifE (hifE) from Haemophilus influenzae.